Reading from the N-terminus, the 625-residue chain is Probable inactive receptor kinase At5g16590 (625 aa).

Positions M1–S23 are cleaved as a signal peptide. 5 LRR repeats span residues K88–T111, L112–L134, N136–A158, R160–L182, and Q183–P204. The helical transmembrane segment at A246–F266 threads the bilayer. Residues K343–V613 enclose the Protein kinase domain. A Phosphoserine modification is found at S345. ATP is bound by residues L349 to S357 and K371. The residue at position 422 (S422) is a Phosphoserine. Phosphothreonine is present on residues T442 and T496. S517 is modified (phosphoserine). At T593 the chain carries Phosphothreonine. Residues S619 and S624 each carry the phosphoserine modification.

The protein belongs to the protein kinase superfamily. Ser/Thr protein kinase family.

It localises to the cell membrane. In terms of biological role, might be involved in early recognition of growth promoting fungi. Appears to be specific for P.indica. This is Probable inactive receptor kinase At5g16590 from Arabidopsis thaliana (Mouse-ear cress).